Reading from the N-terminus, the 582-residue chain is Histone deacetylase 9-B (582 aa).

Residues Ser-146–Pro-195 form an interaction with mef2 region. Residues Ser-189–Lys-205 show a composition bias toward polar residues. 4 disordered regions span residues Ser-189–Asn-254, Thr-270–Leu-314, Leu-409–Ser-447, and Val-496–Ser-567. Basic and acidic residues-rich tracts occupy residues Asp-213–Val-224 and Lys-238–Gly-253. The segment covering Thr-270 to Ala-289 has biased composition (low complexity). The segment covering Gly-295–Leu-314 has biased composition (polar residues).

This sequence belongs to the histone deacetylase family. HD type 2 subfamily. Homodimer. Interacts with mef2.

The protein resides in the nucleus. It carries out the reaction N(6)-acetyl-L-lysyl-[histone] + H2O = L-lysyl-[histone] + acetate. In terms of biological role, devoided of intrinsic deacetylase activity, promotes the deacetylation of lysine residues on the N-terminal part of the core histones (H2A, H2B, H3 and H4) by recruiting other histone deacetylases. Histone deacetylation gives a tag for epigenetic repression and plays an important role in transcriptional regulation, cell cycle progression and developmental events. Represses MEF2-dependent transcription. This is Histone deacetylase 9-B (hdac9b) from Danio rerio (Zebrafish).